Here is a 145-residue protein sequence, read N- to C-terminus: Prefoldin subunit alpha (145 aa).

This sequence belongs to the prefoldin alpha subunit family. In terms of assembly, heterohexamer of two alpha and four beta subunits.

The protein resides in the cytoplasm. In terms of biological role, molecular chaperone capable of stabilizing a range of proteins. Seems to fulfill an ATP-independent, HSP70-like function in archaeal de novo protein folding. The sequence is that of Prefoldin subunit alpha from Nitrosopumilus maritimus (strain SCM1).